Consider the following 166-residue polypeptide: Peptidyl-prolyl cis-trans isomerase-like 1 (166 aa).

The PPIase cyclophilin-type domain occupies 10–164; that stretch reads QPPNVYLETS…DDVKILKAYP (155 aa). Residues 54-65, 70-71, 99-104, 109-113, T119, and K125 each bind cyclosporin A; these read HRIIKDFMIQGG, TG, AMANAG, and GSQFF. Position 149 is a phosphoserine (S149).

It belongs to the cyclophilin-type PPIase family. PPIL1 subfamily. As to quaternary structure, identified in the spliceosome C complex. Interacts with SNW1/SKIP. Interacts with CDC40/PRP17; this interaction leads to CDC40 isomerization. Interacts with RBM22.

The protein localises to the nucleus. The catalysed reaction is [protein]-peptidylproline (omega=180) = [protein]-peptidylproline (omega=0). Inhibited by Cyclosporin A. Involved in pre-mRNA splicing as component of the spliceosome. PPIases accelerate the folding of proteins. It catalyzes the cis-trans isomerization of proline imidic peptide bonds in oligopeptides. Catalyzes prolyl peptide bond isomerization in CDC40/PRP17. Plays an important role in embryonic brain development; this function is independent of its isomerase activity. This Mus musculus (Mouse) protein is Peptidyl-prolyl cis-trans isomerase-like 1 (Ppil1).